The chain runs to 212 residues: Thymidylate kinase (212 aa).

7 to 14 (GGEGCGKT) serves as a coordination point for ATP.

It belongs to the thymidylate kinase family.

It catalyses the reaction dTMP + ATP = dTDP + ADP. Phosphorylation of dTMP to form dTDP in both de novo and salvage pathways of dTTP synthesis. The polypeptide is Thymidylate kinase (Gloeobacter violaceus (strain ATCC 29082 / PCC 7421)).